We begin with the raw amino-acid sequence, 426 residues long: Histidine--tRNA ligase (426 aa).

It belongs to the class-II aminoacyl-tRNA synthetase family. As to quaternary structure, homodimer.

The protein localises to the cytoplasm. It catalyses the reaction tRNA(His) + L-histidine + ATP = L-histidyl-tRNA(His) + AMP + diphosphate + H(+). The sequence is that of Histidine--tRNA ligase (hisS) from Streptococcus dysgalactiae subsp. equisimilis (Streptococcus equisimilis).